We begin with the raw amino-acid sequence, 137 residues long: Lysozyme (137 aa).

The first 20 residues, 1 to 20 (MQRLLGSIVILATVFTFCEA), serve as a signal peptide directing secretion. An I-type lysozyme domain is found at 21 to 135 (TISSACLRCI…EKVHQQGCNV (115 aa)). Intrachain disulfides connect C26/C102, C31/C37, C42/C51, C64/C84, C74/C80, and C98/C116. The active-site Proton donor is E34. The active-site Nucleophile is D45. Residue 57 to 63 (KENYWED) participates in substrate binding. Substrate-binding positions include Y88 and 109–111 (HNG).

This sequence belongs to the glycosyl hydrolase 22 family. Type-I lysozyme subfamily. As to expression, expressed in the basophil cells of the oyster digestive gland.

It is found in the secreted. It carries out the reaction Hydrolysis of (1-&gt;4)-beta-linkages between N-acetylmuramic acid and N-acetyl-D-glucosamine residues in a peptidoglycan and between N-acetyl-D-glucosamine residues in chitodextrins.. Has bacteriolytic activity. May play a role in digestion and in the host defense mechanisms against invading microbes. This chain is Lysozyme (lysoz), found in Magallana gigas (Pacific oyster).